A 275-amino-acid polypeptide reads, in one-letter code: Phosphate import ATP-binding protein PstB 2 (275 aa).

Residues 29 to 270 form the ABC transporter domain; the sequence is LEVKNLNIYY…PSEKKTEDYI (242 aa). 61–68 serves as a coordination point for ATP; it reads GPSGCGKS.

Belongs to the ABC transporter superfamily. Phosphate importer (TC 3.A.1.7) family. As to quaternary structure, the complex is composed of two ATP-binding proteins (PstB), two transmembrane proteins (PstC and PstA) and a solute-binding protein (PstS).

Its subcellular location is the cell membrane. It catalyses the reaction phosphate(out) + ATP + H2O = ADP + 2 phosphate(in) + H(+). Its function is as follows. Part of the ABC transporter complex PstSACB involved in phosphate import. Responsible for energy coupling to the transport system. This is Phosphate import ATP-binding protein PstB 2 from Bacillus licheniformis (strain ATCC 14580 / DSM 13 / JCM 2505 / CCUG 7422 / NBRC 12200 / NCIMB 9375 / NCTC 10341 / NRRL NRS-1264 / Gibson 46).